Here is a 311-residue protein sequence, read N- to C-terminus: Nuclear hormone receptor family member nhr-111 (311 aa).

Residues 39–115 (ITLCAVCGDT…KGMNKNAVQP (77 aa)) constitute a DNA-binding region (nuclear receptor). 2 NR C4-type zinc fingers span residues 42-62 (CAVC…CFGC) and 78-98 (CWNG…CKSC). An NR LBD domain is found at 116-311 (ERTSHSYTVE…KACEIVISFL (196 aa)).

This sequence belongs to the nuclear hormone receptor family.

Its subcellular location is the nucleus. In terms of biological role, orphan nuclear receptor. The polypeptide is Nuclear hormone receptor family member nhr-111 (nhr-111) (Caenorhabditis elegans).